The chain runs to 965 residues: Klaroid protein (965 aa).

The segment at 1 to 20 (MSENTYQIETRRRSRSKTPF) is disordered. Transmembrane regions (helical) follow at residues 303-323 (TIGG…GSVL) and 343-363 (FLIF…LLLQ). Residues 585–612 (SSDAEVQIERLNREIAFIKLALSDKQAE) are a coiled coil. Residues 801 to 963 (GGQILSTRCT…YRFRVHGKPP (163 aa)) form the SUN domain.

In terms of assembly, core component of the LINC complex which is composed of inner nuclear membrane SUN domain-containing proteins coupled to outer nuclear membrane KASH domain-containing nesprins. As to expression, expressed in all cells in the eye disk.

The protein resides in the membrane. It is found in the cytoplasm. It localises to the cytoskeleton. Its subcellular location is the microtubule organizing center. The protein localises to the perinuclear region. Component of the LINC (LInker of Nucleoskeleton and Cytoskeleton) complex involved in the connection between the nuclear lamina and the cytoskeleton. Is required to nuclear migration in eye and to anchor klar in the nuclear membrane. In Drosophila melanogaster (Fruit fly), this protein is Klaroid protein.